Consider the following 348-residue polypeptide: N-acetyl-gamma-glutamyl-phosphate reductase (348 aa).

Residue Cys150 is part of the active site.

This sequence belongs to the NAGSA dehydrogenase family. Type 1 subfamily.

Its subcellular location is the cytoplasm. The enzyme catalyses N-acetyl-L-glutamate 5-semialdehyde + phosphate + NADP(+) = N-acetyl-L-glutamyl 5-phosphate + NADPH + H(+). It participates in amino-acid biosynthesis; L-arginine biosynthesis; N(2)-acetyl-L-ornithine from L-glutamate: step 3/4. Catalyzes the NADPH-dependent reduction of N-acetyl-5-glutamyl phosphate to yield N-acetyl-L-glutamate 5-semialdehyde. The polypeptide is N-acetyl-gamma-glutamyl-phosphate reductase (Symbiobacterium thermophilum (strain DSM 24528 / JCM 14929 / IAM 14863 / T)).